The primary structure comprises 469 residues: Adenosylhomocysteinase (469 aa).

Thr63, Asp139, and Glu164 together coordinate substrate. 165-167 serves as a coordination point for NAD(+); it reads TTT. Substrate contacts are provided by Lys194 and Asp198. NAD(+) contacts are provided by residues Asn199, 228–233, Glu251, Asn300, 321–323, and Asn375; these read GYGDVG and IGH.

This sequence belongs to the adenosylhomocysteinase family. NAD(+) serves as cofactor.

It is found in the cytoplasm. It catalyses the reaction S-adenosyl-L-homocysteine + H2O = L-homocysteine + adenosine. It functions in the pathway amino-acid biosynthesis; L-homocysteine biosynthesis; L-homocysteine from S-adenosyl-L-homocysteine: step 1/1. In terms of biological role, may play a key role in the regulation of the intracellular concentration of adenosylhomocysteine. The polypeptide is Adenosylhomocysteinase (Pseudomonas aeruginosa (strain LESB58)).